Reading from the N-terminus, the 256-residue chain is Cilia- and flagella-associated protein 410 (256 aa).

3 LRR repeats span residues Ser-19–Pro-40, Ser-41–Gln-62, and Arg-63–Lys-84. The 41-residue stretch at Asn-97–Glu-137 folds into the LRRCT domain. Disordered stretches follow at residues Glu-129–Lys-156 and Ala-168–Arg-212. Phosphoserine occurs at positions 136 and 177.

As to quaternary structure, found in a complex with CFAP410, NEK1 and SPATA7. Interacts with NEK1. As to expression, widely expressed. Expressed in the retina.

It is found in the mitochondrion. The protein resides in the cytoplasm. Its subcellular location is the cytoskeleton. The protein localises to the cilium basal body. It localises to the cell projection. It is found in the cilium. The protein resides in the photoreceptor outer segment. Plays a role in cilia formation and/or maintenance. Plays a role in the regulation of cell morphology and cytoskeletal organization. Involved in DNA damage repair. In Homo sapiens (Human), this protein is Cilia- and flagella-associated protein 410.